The following is a 110-amino-acid chain: Cuticle protein 13 (110 aa).

In Limulus polyphemus (Atlantic horseshoe crab), this protein is Cuticle protein 13.